Here is a 75-residue protein sequence, read N- to C-terminus: MKEANTRRYIYLCLVVVLLSIIITTEAEDDRLFCIRHHKYCGHRPKRCCSGLFCRCNTFGTNCRCQSKGALGKLI.

The signal sequence occupies residues 1 to 27; it reads MKEANTRRYIYLCLVVVLLSIIITTEA. Positions 28-30 are excised as a propeptide; the sequence is EDD. Cystine bridges form between Cys34–Cys49, Cys41–Cys54, Cys48–Cys65, and Cys56–Cys63.

It belongs to the xibalbin-13 family. Expressed by the venom gland and the whole body.

It localises to the secreted. Probable neurotoxin. Strongly inhibits voltage-gated potassium channels (Kv1.1/KCNA1, Kv1.2/KCNA2, Kv1.3/KCNA3, and Kv1.6/KCNA6, with the highest toxicity against Kv1.1 (85.1% inhibition at 1 uM)) and mildly inhibits sodium channels (Nav1.2/SCN2A, Nav1.4/SCN4A, Nav1.5/SCN5A, Nav1.6/SCN8A, and BgNav). Induces activation of protein kinase A type II (PKA-II) and MAP kinase Erk1/2 in primary nociceptive and non-nociceptive sensory neurons. Does not show cytotoxic activity. Does not have an impact on Ca2+, cAMP, and NO signaling in the cell types analyzed. Does not interfere with the adhesion of leukocytes to endothelial cells. The chain is Xibalbin-13 2 from Xibalbanus tulumensis (Blind cave remipede).